A 312-amino-acid polypeptide reads, in one-letter code: Speedy protein A (312 aa).

Residues 67–199 are speedy/Ringo box; Required for CDK-binding; sequence RQEMTAFFKL…SHYIWQRERS (133 aa). Position 221 is a phosphoserine (Ser221). Position 223 is a phosphothreonine (Thr223).

It belongs to the Speedy/Ringo family. In terms of assembly, interacts with CDK1. Interacts with CDK2. May interact with CDKN1B/KIP1. Identified in a complex with CDK2 and CDKN1B/KIP1, where it interacts primarily with CDK2.

It is found in the nucleus. Regulates the G1/S phase transition of the cell cycle by binding and activating CDK1 and CDK2. Contributes to CDK2 activation without promoting CDK2 phosphorylation, by inducing a conformation change of the CDK2 T-loop that obstructs the substrate-binding cleft prior to kinase activation. Interferes with CDKN1B-mediated inhibition of CDK2. Mediates cell survival during the DNA damage process through activation of CDK2. The sequence is that of Speedy protein A from Rattus norvegicus (Rat).